The chain runs to 133 residues: Small ribosomal subunit protein eS24y (133 aa).

Positions 104-133 are disordered; it reads KSRKQIKERKNRAKKIRGVKKTKAGDTKKK. Residues 109–125 are compositionally biased toward basic residues; it reads IKERKNRAKKIRGVKKT.

It belongs to the eukaryotic ribosomal protein eS24 family.

In Arabidopsis thaliana (Mouse-ear cress), this protein is Small ribosomal subunit protein eS24y (RPS24B).